The primary structure comprises 367 residues: Alanine racemase (367 aa).

Residue Lys40 is the Proton acceptor; specific for D-alanine of the active site. The residue at position 40 (Lys40) is an N6-(pyridoxal phosphate)lysine. A substrate-binding site is contributed by Arg136. The Proton acceptor; specific for L-alanine role is filled by Tyr263. Residue Met310 coordinates substrate.

It belongs to the alanine racemase family. It depends on pyridoxal 5'-phosphate as a cofactor.

It carries out the reaction L-alanine = D-alanine. It participates in amino-acid biosynthesis; D-alanine biosynthesis; D-alanine from L-alanine: step 1/1. Catalyzes the interconversion of L-alanine and D-alanine. May also act on other amino acids. This Streptococcus thermophilus (strain CNRZ 1066) protein is Alanine racemase (alr).